A 609-amino-acid polypeptide reads, in one-letter code: UvrABC system protein C (609 aa).

Residues Ser16–Val94 enclose the GIY-YIG domain. Positions Gln203 to Val238 constitute a UVR domain.

The protein belongs to the UvrC family. Interacts with UvrB in an incision complex.

The protein localises to the cytoplasm. The UvrABC repair system catalyzes the recognition and processing of DNA lesions. UvrC both incises the 5' and 3' sides of the lesion. The N-terminal half is responsible for the 3' incision and the C-terminal half is responsible for the 5' incision. This chain is UvrABC system protein C, found in Shewanella pealeana (strain ATCC 700345 / ANG-SQ1).